Here is a 133-residue protein sequence, read N- to C-terminus: Interleukin-4 (133 aa).

Residues 1–24 (MGLTYQLIPALVCLLAFTSTFVHG) form the signal peptide. 6 N-linked (GlcNAc...) asparagine glycosylation sites follow: Asn-28, Asn-45, Asn-62, Asn-84, Asn-96, and Asn-102. 2 disulfide bridges follow: Cys-48–Cys-85 and Cys-70–Cys-113.

This sequence belongs to the IL-4/IL-13 family.

The protein localises to the secreted. Participates in at least several B-cell activation processes as well as of other cell types. It is a costimulator of DNA-synthesis. It induces the expression of class II MHC molecules on resting B-cells. It enhances both secretion and cell surface expression of IgE and IgG1. It also regulates the expression of the low affinity Fc receptor for IgE (CD23) on both lymphocytes and monocytes. Positively regulates IL31RA expression in macrophages. Stimulates autophagy in dendritic cells by interfering with mTORC1 signaling and through the induction of RUFY4. This chain is Interleukin-4 (IL4), found in Felis catus (Cat).